Reading from the N-terminus, the 942-residue chain is Probable serine/threonine-protein kinase DDB_G0279719 (942 aa).

Residues 4–617 form the Protein kinase domain; sequence YEVVKLIGVG…IDLILQNKLF (614 aa). ATP is bound by residues 10-18 and lysine 33; that span reads IGVGGEAKA. 4 disordered regions span residues 109–170, 247–303, 352–371, and 408–445; these read NNNQ…INNN, SFSN…NGNT, QPPQ…GADV, and NDPS…LNIN. The segment covering 258 to 272 has biased composition (low complexity); the sequence is NSNDSNLHQSSSNSS. Residues 288 to 303 show a composition bias toward polar residues; the sequence is SPGTSTPYQKGSNGNT. 2 stretches are compositionally biased toward low complexity: residues 353 to 367 and 410 to 432; these read PPQS…SSPT and PSSH…PQSP. The Proton acceptor role is filled by aspartate 487. The segment at 642–686 is disordered; it reads TNSKSNSSNNLNNSNSNNDIINNNNNNNSSNNINNNNIVNLNNSY. A coiled-coil region spans residues 675 to 703; it reads NNNNIVNLNNSYNNKQDKCEQRNKSLNQN.

It belongs to the protein kinase superfamily. Ser/Thr protein kinase family.

The catalysed reaction is L-seryl-[protein] + ATP = O-phospho-L-seryl-[protein] + ADP + H(+). It catalyses the reaction L-threonyl-[protein] + ATP = O-phospho-L-threonyl-[protein] + ADP + H(+). In Dictyostelium discoideum (Social amoeba), this protein is Probable serine/threonine-protein kinase DDB_G0279719.